Reading from the N-terminus, the 225-residue chain is Prepilin leader peptidase/N-methyltransferase (225 aa).

Over 1 to 2 (MT) the chain is Periplasmic. The chain crosses the membrane as a helical span at residues 3–23 (MLLPLFILVGFIADYFVNAIA). Residues 24-67 (YHLSPLEDKTALTFRQVLVHFRQKKYAWHDTVPLILCVAAAIAC) are Cytoplasmic-facing. A helical membrane pass occupies residues 68–88 (ALAPFTPIVTGALFLYFCFVL). Over 89–103 (TLSVIDFRTQLLPDK) the chain is Periplasmic. Residues 104 to 124 (LTLPLLWLGLVFNAQYGLIDL) form a helical membrane-spanning segment. Residues 125-127 (HDA) lie on the Cytoplasmic side of the membrane. The chain crosses the membrane as a helical span at residues 128-148 (VYGAVAGYGVLWCVYWGVWLV). At 149 to 174 (CHKEGLGYGDFKLLAAAGAWCGWQTL) the chain is on the periplasmic side. The chain crosses the membrane as a helical span at residues 175-195 (PMILLIASLGGIGYAIVSQLL). The Cytoplasmic segment spans residues 196-202 (QRRTITT). Residues 203–223 (IAFGPWLALGSMINLGYLAWI) traverse the membrane as a helical segment. At 224-225 (SY) the chain is on the periplasmic side.

Belongs to the peptidase A24 family.

Its subcellular location is the cell inner membrane. It catalyses the reaction Typically cleaves a -Gly-|-Phe- bond to release an N-terminal, basic peptide of 5-8 residues from type IV prepilin, and then N-methylates the new N-terminal amino group, the methyl donor being S-adenosyl-L-methionine.. In terms of biological role, plays a role in type II pseudopili formation by proteolytically removing the leader sequence from substrate proteins and subsequently monomethylating the alpha-amino group of the newly exposed N-terminal phenylalanine. Substrates include proteins required for biogenesis of the type II general secretory apparatus. This is Prepilin leader peptidase/N-methyltransferase (gspO) from Escherichia coli (strain K12).